Consider the following 135-residue polypeptide: Putative pre-16S rRNA nuclease (135 aa).

Belongs to the YqgF nuclease family.

Its subcellular location is the cytoplasm. In terms of biological role, could be a nuclease involved in processing of the 5'-end of pre-16S rRNA. The sequence is that of Putative pre-16S rRNA nuclease from Clostridium acetobutylicum (strain ATCC 824 / DSM 792 / JCM 1419 / IAM 19013 / LMG 5710 / NBRC 13948 / NRRL B-527 / VKM B-1787 / 2291 / W).